The following is a 333-amino-acid chain: Glyceraldehyde-3-phosphate dehydrogenase (333 aa).

The residue at position 1 (serine 1) is an N-acetylserine. NAD(+) is bound by residues 10 to 11 (RI), aspartate 31, and methionine 76. Residues 147 to 149 (SCT), threonine 178, 207 to 208 (TG), and arginine 230 each bind D-glyceraldehyde 3-phosphate. Catalysis depends on cysteine 148, which acts as the Nucleophile. Asparagine 312 serves as a coordination point for NAD(+).

Belongs to the glyceraldehyde-3-phosphate dehydrogenase family. In terms of assembly, homotetramer.

Its subcellular location is the cytoplasm. It catalyses the reaction D-glyceraldehyde 3-phosphate + phosphate + NAD(+) = (2R)-3-phospho-glyceroyl phosphate + NADH + H(+). It functions in the pathway carbohydrate degradation; glycolysis; pyruvate from D-glyceraldehyde 3-phosphate: step 1/5. The sequence is that of Glyceraldehyde-3-phosphate dehydrogenase from Panulirus versicolor (Painted spiny lobster).